The sequence spans 671 residues: UBA domain-containing protein RUP1 (671 aa).

The region spanning 1–41 (MMDNQAVKSLLEMGIPHEVAVDALQRTGGNLEAAVNFIFSN) is the UBA domain. At S56 the chain carries Phosphoserine. Residues 68–87 (GTKPCDVPNNGDQDIDMPDV) are disordered. A coiled-coil region spans residues 432 to 501 (SKRKQARTRS…LNSARAAKME (70 aa)). The segment at 643–671 (DGMGDPEQATNNINNGNDNDNDDDIDSDN) is disordered. Over residues 661–671 (NDNDDDIDSDN) the composition is skewed to acidic residues.

As to quaternary structure, forms a ternary complex with RSP5 and UBP2.

The protein localises to the cytoplasm. Its subcellular location is the nucleus. Its function is as follows. Modulates the activity of the RSP5 HECT ubiquitin-protein ligase through its mediation of the interaction between RSP5 and the deubiquitinase UBP2. Involved in regulation of cell wall homeostasis. The protein is UBA domain-containing protein RUP1 (RUP1) of Saccharomyces cerevisiae (strain ATCC 204508 / S288c) (Baker's yeast).